Consider the following 271-residue polypeptide: tRNA (guanine-N(1)-)-methyltransferase (271 aa).

S-adenosyl-L-methionine is bound by residues glycine 120 and 145–150 (IGDYVL).

It belongs to the RNA methyltransferase TrmD family. Homodimer.

It localises to the cytoplasm. The catalysed reaction is guanosine(37) in tRNA + S-adenosyl-L-methionine = N(1)-methylguanosine(37) in tRNA + S-adenosyl-L-homocysteine + H(+). Its function is as follows. Specifically methylates guanosine-37 in various tRNAs. The chain is tRNA (guanine-N(1)-)-methyltransferase from Bifidobacterium longum subsp. infantis (strain ATCC 15697 / DSM 20088 / JCM 1222 / NCTC 11817 / S12).